A 439-amino-acid polypeptide reads, in one-letter code: 3-phosphoshikimate 1-carboxyvinyltransferase (439 aa).

Residues lysine 29, serine 30, and arginine 34 each coordinate 3-phosphoshikimate. Residue lysine 29 coordinates phosphoenolpyruvate. Glycine 100 and arginine 128 together coordinate phosphoenolpyruvate. 3-phosphoshikimate contacts are provided by serine 173, serine 174, glutamine 175, serine 201, aspartate 321, and lysine 348. Residue glutamine 175 participates in phosphoenolpyruvate binding. Aspartate 321 acts as the Proton acceptor in catalysis. Arginine 352 and arginine 395 together coordinate phosphoenolpyruvate.

This sequence belongs to the EPSP synthase family. Monomer.

Its subcellular location is the cytoplasm. The catalysed reaction is 3-phosphoshikimate + phosphoenolpyruvate = 5-O-(1-carboxyvinyl)-3-phosphoshikimate + phosphate. The protein operates within metabolic intermediate biosynthesis; chorismate biosynthesis. In terms of biological role, catalyzes the transfer of the enolpyruvyl moiety of phosphoenolpyruvate (PEP) to the 5-hydroxyl of shikimate-3-phosphate (S3P) to produce enolpyruvyl shikimate-3-phosphate and inorganic phosphate. This Halobacterium salinarum (strain ATCC 700922 / JCM 11081 / NRC-1) (Halobacterium halobium) protein is 3-phosphoshikimate 1-carboxyvinyltransferase.